The primary structure comprises 187 residues: COMM domain-containing protein 1 (187 aa).

Residues S112–S186 form the COMM domain.

The protein belongs to the COMM domain-containing protein 1 family. Component of the commander complex consisting of the CCC subcomplex and the retriever subcomplex.

Scaffold protein in the commander complex that is essential for endosomal recycling of transmembrane cargos; the commander complex is composed of the CCC subcomplex and the retriever subcomplex. This chain is COMM domain-containing protein 1 (commd1), found in Dictyostelium discoideum (Social amoeba).